The chain runs to 341 residues: Anthranilate phosphoribosyltransferase (341 aa).

5-phospho-alpha-D-ribose 1-diphosphate is bound by residues G79, 82-83 (GD), T87, 89-92 (NIST), 107-115 (KHGNRAVSS), and S119. G79 contacts anthranilate. A Mg(2+)-binding site is contributed by S91. N110 contacts anthranilate. Anthranilate is bound at residue R165. Positions 224 and 225 each coordinate Mg(2+).

It belongs to the anthranilate phosphoribosyltransferase family. In terms of assembly, homodimer. Mg(2+) serves as cofactor.

The catalysed reaction is N-(5-phospho-beta-D-ribosyl)anthranilate + diphosphate = 5-phospho-alpha-D-ribose 1-diphosphate + anthranilate. Its pathway is amino-acid biosynthesis; L-tryptophan biosynthesis; L-tryptophan from chorismate: step 2/5. Its function is as follows. Catalyzes the transfer of the phosphoribosyl group of 5-phosphorylribose-1-pyrophosphate (PRPP) to anthranilate to yield N-(5'-phosphoribosyl)-anthranilate (PRA). The protein is Anthranilate phosphoribosyltransferase of Bacillus thuringiensis subsp. konkukian (strain 97-27).